We begin with the raw amino-acid sequence, 170 residues long: Myosin regulatory light chain 2, skeletal muscle isoform (170 aa).

Alanine 2 carries the n,N,N-trimethylalanine modification. Serine 16 and serine 17 each carry phosphoserine. Phosphothreonine is present on residues threonine 26 and threonine 36. The region spanning 26–61 (TQIQEFKEAFTVIDQNRDGIIDKEDLRDTFAAMGRL) is the EF-hand 1 domain. Positions 39, 41, 43, and 50 each coordinate Ca(2+). Serine 76 carries the phosphoserine modification. EF-hand domains lie at 96–131 (DPED…QCDR) and 132–167 (FSQE…GDAK). Threonine 102 bears the Phosphothreonine mark.

Myosin is a hexamer of 2 heavy chains and 4 light chains.

Functionally, plays a role in muscle contraction. The chain is Myosin regulatory light chain 2, skeletal muscle isoform from Bos taurus (Bovine).